The primary structure comprises 338 residues: Lipoate-protein ligase A (338 aa).

The 188-residue stretch at 29 to 216 (PATQRVLFLW…AFFAHYGERV (188 aa)) folds into the BPL/LPL catalytic domain. ATP is bound by residues Arg71, 76 to 79 (GAVF), and Lys134. Residue Lys134 participates in (R)-lipoate binding.

This sequence belongs to the LplA family. As to quaternary structure, monomer.

Its subcellular location is the cytoplasm. The catalysed reaction is L-lysyl-[lipoyl-carrier protein] + (R)-lipoate + ATP = N(6)-[(R)-lipoyl]-L-lysyl-[lipoyl-carrier protein] + AMP + diphosphate + H(+). The protein operates within protein modification; protein lipoylation via exogenous pathway; protein N(6)-(lipoyl)lysine from lipoate: step 1/2. It functions in the pathway protein modification; protein lipoylation via exogenous pathway; protein N(6)-(lipoyl)lysine from lipoate: step 2/2. Its function is as follows. Catalyzes both the ATP-dependent activation of exogenously supplied lipoate to lipoyl-AMP and the transfer of the activated lipoyl onto the lipoyl domains of lipoate-dependent enzymes. The chain is Lipoate-protein ligase A from Salmonella agona (strain SL483).